The sequence spans 626 residues: Chaperone protein HtpG (626 aa).

Positions M1–R341 are a; substrate-binding. Positions E342 to K552 are b. The segment at V553 to V626 is c.

This sequence belongs to the heat shock protein 90 family. In terms of assembly, homodimer.

The protein localises to the cytoplasm. Molecular chaperone. Has ATPase activity. This chain is Chaperone protein HtpG, found in Bacillus velezensis (strain DSM 23117 / BGSC 10A6 / LMG 26770 / FZB42) (Bacillus amyloliquefaciens subsp. plantarum).